A 556-amino-acid polypeptide reads, in one-letter code: Chaperone protein HscC (556 aa).

It belongs to the heat shock protein 70 family.

Probable chaperone. Has ATPase activity. Not stimulated by DnaJ. This is Chaperone protein HscC (hscC) from Escherichia coli (strain K12).